We begin with the raw amino-acid sequence, 236 residues long: Probable apoptosis inhibitor 2 (236 aa).

A BIR repeat occupies 85–150; sequence RKRSFASFKW…AHAADCAFRR (66 aa). Zn(2+)-binding residues include cysteine 123, cysteine 126, histidine 142, and cysteine 146. Residues 189 to 223 form an RING-type zinc finger; it reads CKVCFVNEKSVCFLPCRHLVVCAECSPRCKRCCVC.

This Orgyia pseudotsugata multicapsid polyhedrosis virus (OpMNPV) protein is Probable apoptosis inhibitor 2 (IAP2).